The primary structure comprises 213 residues: uncharacterized protein (213 aa).

Residues Ser114, Asp162, and His194 each act as charge relay system in the active site.

Belongs to the AB hydrolase superfamily. AB hydrolase 2 family.

This is an uncharacterized protein from Rickettsia bellii (strain RML369-C).